Consider the following 248-residue polypeptide: Exosome complex component Rrp41 (248 aa).

It belongs to the RNase PH family. Rrp41 subfamily. As to quaternary structure, component of the archaeal exosome complex. Forms a hexameric ring-like arrangement composed of 3 Rrp41-Rrp42 heterodimers. The hexameric ring associates with a trimer of Rrp4 and/or Csl4 subunits.

It is found in the cytoplasm. Functionally, catalytic component of the exosome, which is a complex involved in RNA degradation. Has 3'-&gt;5' exoribonuclease activity. Can also synthesize heteromeric RNA-tails. Binds RNA. This Saccharolobus solfataricus (strain ATCC 35092 / DSM 1617 / JCM 11322 / P2) (Sulfolobus solfataricus) protein is Exosome complex component Rrp41.